A 346-amino-acid polypeptide reads, in one-letter code: Phosphoribosylformylglycinamidine cyclo-ligase (346 aa).

It belongs to the AIR synthase family.

It is found in the cytoplasm. It carries out the reaction 2-formamido-N(1)-(5-O-phospho-beta-D-ribosyl)acetamidine + ATP = 5-amino-1-(5-phospho-beta-D-ribosyl)imidazole + ADP + phosphate + H(+). The protein operates within purine metabolism; IMP biosynthesis via de novo pathway; 5-amino-1-(5-phospho-D-ribosyl)imidazole from N(2)-formyl-N(1)-(5-phospho-D-ribosyl)glycinamide: step 2/2. In Shewanella halifaxensis (strain HAW-EB4), this protein is Phosphoribosylformylglycinamidine cyclo-ligase.